Reading from the N-terminus, the 302-residue chain is MTIFARDLIYRIETKVLLPLFLVHLLPYVTCQQESESVDRNRKTNFPTETVIAIIVLAIFISLSMVACFLHKTFYRAEVEAASQEVFHSRARRGLEKELVESFPIFLYSEVKGLKIGKGGVECAICLSEFVDKETLRWMPPCSHTFHANCIDVWLSSQSTCPACRANLSLKPGESYPYPITDLETGNEQRDEHSLLQLGTNLDRFTLQLPEEMQRQLVSLNLIRTSNMTLPRAMSSRQGYRSGFSHGRQTLRRAISMSLSFSLQAASVRSTVGRDDLVLETSQAKDKDLCEQSFQHLMPEKV.

An N-terminal signal peptide occupies residues 1 to 31 (MTIFARDLIYRIETKVLLPLFLVHLLPYVTC). Residues 50-70 (TVIAIIVLAIFISLSMVACFL) traverse the membrane as a helical segment. An RING-type; atypical zinc finger spans residues 123 to 165 (CAICLSEFVDKETLRWMPPCSHTFHANCIDVWLSSQSTCPACR). Serine 226 is modified (phosphoserine).

It belongs to the RING-type zinc finger family. ATL subfamily.

The protein resides in the membrane. It catalyses the reaction S-ubiquitinyl-[E2 ubiquitin-conjugating enzyme]-L-cysteine + [acceptor protein]-L-lysine = [E2 ubiquitin-conjugating enzyme]-L-cysteine + N(6)-ubiquitinyl-[acceptor protein]-L-lysine.. The protein operates within protein modification; protein ubiquitination. The chain is Putative RING-H2 finger protein ATL35 (ATL35) from Arabidopsis thaliana (Mouse-ear cress).